The following is a 216-amino-acid chain: Phosphoserine phosphatase (216 aa).

The active-site Nucleophile is D10. Mg(2+) contacts are provided by D10 and D12. The Proton donor role is filled by D12. Residues E19, R55, 98 to 99 (SG), and K143 each bind substrate. D166 is a Mg(2+) binding site. N169 lines the substrate pocket.

This sequence belongs to the HAD-like hydrolase superfamily. SerB family. The cofactor is Mg(2+).

The catalysed reaction is O-phospho-L-serine + H2O = L-serine + phosphate. It catalyses the reaction O-phospho-D-serine + H2O = D-serine + phosphate. Its pathway is amino-acid biosynthesis; L-serine biosynthesis; L-serine from 3-phospho-D-glycerate: step 3/3. In Lactococcus lactis subsp. lactis (strain IL1403) (Streptococcus lactis), this protein is Phosphoserine phosphatase.